A 202-amino-acid polypeptide reads, in one-letter code: MDFVNNDTRQIAKNLLGVKVIYQDTTQTYTGYIVETEAYLGLNDRAAHGYGGKITPKVTSLYKRGGTIYAHVMHTHLLINFVTKSEGIPEGVLIRAIEPEDGLSAMFRNRGKKGYEVTNGPGKWTKAFNIPRAIDGARLNDCRLSIDTKNRKYPKDIIASPRIGIPNKGDWTHKSLRYTVKGNPFVSRMRKSDCMFPEDTWK.

Belongs to the DNA glycosylase MPG family.

This Staphylococcus aureus (strain MRSA252) protein is Putative 3-methyladenine DNA glycosylase.